The following is a 610-amino-acid chain: UvrABC system protein C (610 aa).

The GIY-YIG domain occupies 12–91 (TSPGVYLYKN…IKQKKPRFNI (80 aa)). Positions 202–237 (SDLKQSLTARMNKAAEGMQFELAAKYRDLITTVEDL) constitute a UVR domain.

Belongs to the UvrC family. As to quaternary structure, interacts with UvrB in an incision complex.

It is found in the cytoplasm. Its function is as follows. The UvrABC repair system catalyzes the recognition and processing of DNA lesions. UvrC both incises the 5' and 3' sides of the lesion. The N-terminal half is responsible for the 3' incision and the C-terminal half is responsible for the 5' incision. The chain is UvrABC system protein C from Koribacter versatilis (strain Ellin345).